The sequence spans 341 residues: Phosphate acyltransferase (341 aa).

The protein belongs to the PlsX family. Homodimer. Probably interacts with PlsY.

Its subcellular location is the cytoplasm. It catalyses the reaction a fatty acyl-[ACP] + phosphate = an acyl phosphate + holo-[ACP]. It participates in lipid metabolism; phospholipid metabolism. Its function is as follows. Catalyzes the reversible formation of acyl-phosphate (acyl-PO(4)) from acyl-[acyl-carrier-protein] (acyl-ACP). This enzyme utilizes acyl-ACP as fatty acyl donor, but not acyl-CoA. The chain is Phosphate acyltransferase from Vibrio cholerae serotype O1 (strain ATCC 39541 / Classical Ogawa 395 / O395).